Reading from the N-terminus, the 423-residue chain is MWEDLKSSDNEVYEILQKELKRQEYGLELIASENYASKSVMEAAGSIFTNKYAEGYPKRRYYGGCEYIDEVETLARDRAKELFNAKFANVQPHSGSQANMGAYLALMKPGDTLMGMSLSHGGHLTHGAPVNFSGMLFNVVSYGVDEETETINYDEVERIAKDAKPKVIVAGGSAYSRIIDFKRFREIADEVGAYLMVDMAHFAGLVAAGIHPNPVEYAHVVTSTTHKTLRGPRGGIILTNDSDIYKSINKIIFPGIQGGPLEHIIAAKAVAFKEAMSGEFKEYQKQVVRNSKALSNELASKNLRIVSGGTDTHLFLVDLSELNITGKALEKALGQCDITVNKNTVPKETLSPFVTSGIRIGTPAVTTRGMKEEEMKEIASMIAKVANNVLDEEGNIDKDLAQEIKKDVVSLCQRFPMYADLIE.

(6S)-5,6,7,8-tetrahydrofolate is bound by residues leucine 118 and 122–124; that span reads GHL. Lysine 227 carries the post-translational modification N6-(pyridoxal phosphate)lysine. 351–353 serves as a coordination point for (6S)-5,6,7,8-tetrahydrofolate; it reads SPF.

Belongs to the SHMT family. Homodimer. Pyridoxal 5'-phosphate is required as a cofactor.

The protein localises to the cytoplasm. It carries out the reaction (6R)-5,10-methylene-5,6,7,8-tetrahydrofolate + glycine + H2O = (6S)-5,6,7,8-tetrahydrofolate + L-serine. Its pathway is one-carbon metabolism; tetrahydrofolate interconversion. It functions in the pathway amino-acid biosynthesis; glycine biosynthesis; glycine from L-serine: step 1/1. In terms of biological role, catalyzes the reversible interconversion of serine and glycine with tetrahydrofolate (THF) serving as the one-carbon carrier. This reaction serves as the major source of one-carbon groups required for the biosynthesis of purines, thymidylate, methionine, and other important biomolecules. Also exhibits THF-independent aldolase activity toward beta-hydroxyamino acids, producing glycine and aldehydes, via a retro-aldol mechanism. The chain is Serine hydroxymethyltransferase from Petrotoga mobilis (strain DSM 10674 / SJ95).